The primary structure comprises 68 residues: Large ribosomal subunit protein eL24 (68 aa).

Zn(2+) contacts are provided by C7, C10, C33, and C37. The segment at 7–37 (CSYCGREFEPGTGKMFVRNDGRVLFFCSSKC) adopts a C4-type zinc-finger fold.

The protein belongs to the eukaryotic ribosomal protein eL24 family. Part of the 50S ribosomal subunit. Forms a cluster with proteins L3 and L14. It depends on Zn(2+) as a cofactor.

Its function is as follows. Binds to the 23S rRNA. The protein is Large ribosomal subunit protein eL24 of Thermococcus gammatolerans (strain DSM 15229 / JCM 11827 / EJ3).